A 418-amino-acid polypeptide reads, in one-letter code: Magnesium transporter MRS2-E (418 aa).

A disordered region spans residues 119–146 (DAAPSTNPAAADRGNGTEQGDQGSVPGL). A coiled-coil region spans residues 166 to 232 (VCLEHACKDL…RDELEHLLDD (67 aa)). Residues 258-268 (DSHKYASVDHD) show a composition bias toward basic and acidic residues. A disordered region spans residues 258–287 (DSHKYASVDHDDDREEEDHDDETESGRESS). Positions 269–280 (DDREEEDHDDET) are enriched in acidic residues. Residues 344 to 364 (GVMLTTATVVVTAGIVVVSLF) form a helical membrane-spanning segment. The Required for magnesium transport activity signature appears at 365-367 (GMN). The chain crosses the membrane as a helical span at residues 389-409 (FWETTFGTVAGCIAIYLLAIY).

The protein belongs to the CorA metal ion transporter (MIT) (TC 1.A.35.5) family.

It localises to the membrane. Its function is as follows. Magnesium transporter that may mediate the influx of magnesium. This chain is Magnesium transporter MRS2-E (MRS2-E), found in Oryza sativa subsp. indica (Rice).